The chain runs to 462 residues: uncharacterized protein (462 aa).

Residues Met-12–Ala-70 enclose the TRAM domain. 4 residues coordinate S-adenosyl-L-methionine: Gln-294, Tyr-323, Glu-344, and Asp-392. Cys-419 acts as the Nucleophile in catalysis.

Belongs to the class I-like SAM-binding methyltransferase superfamily. RNA M5U methyltransferase family.

This is an uncharacterized protein from Streptococcus pyogenes serotype M3 (strain ATCC BAA-595 / MGAS315).